Here is a 202-residue protein sequence, read N- to C-terminus: LexA repressor (202 aa).

The segment at residues 28-48 (RAEIAQQLGFRSPNAAEEHLK) is a DNA-binding region (H-T-H motif). Residues Ser119 and Lys156 each act as for autocatalytic cleavage activity in the active site.

It belongs to the peptidase S24 family. In terms of assembly, homodimer.

The enzyme catalyses Hydrolysis of Ala-|-Gly bond in repressor LexA.. Its function is as follows. Represses a number of genes involved in the response to DNA damage (SOS response), including recA and lexA. Binds to the 16 bp palindromic sequence 5'-CTGTATATATATACAG-3'. In the presence of single-stranded DNA, RecA interacts with LexA causing an autocatalytic cleavage which disrupts the DNA-binding part of LexA, leading to derepression of the SOS regulon and eventually DNA repair. The chain is LexA repressor from Pectobacterium carotovorum subsp. carotovorum (Erwinia carotovora subsp. carotovora).